The sequence spans 284 residues: L-ribulose-5-phosphate 3-epimerase UlaE (284 aa).

It belongs to the L-ribulose-5-phosphate 3-epimerase family.

It carries out the reaction L-ribulose 5-phosphate = L-xylulose 5-phosphate. The protein operates within cofactor degradation; L-ascorbate degradation; D-xylulose 5-phosphate from L-ascorbate: step 3/4. Its function is as follows. Catalyzes the isomerization of L-xylulose-5-phosphate to L-ribulose-5-phosphate. Is involved in the anaerobic L-ascorbate utilization. The chain is L-ribulose-5-phosphate 3-epimerase UlaE from Escherichia coli (strain ATCC 8739 / DSM 1576 / NBRC 3972 / NCIMB 8545 / WDCM 00012 / Crooks).